A 172-amino-acid polypeptide reads, in one-letter code: 3-hydroxydecanoyl-[acyl-carrier-protein] dehydratase (172 aa).

Residue histidine 71 is part of the active site.

It belongs to the thioester dehydratase family. FabA subfamily. Homodimer.

The protein resides in the cytoplasm. It carries out the reaction a (3R)-hydroxyacyl-[ACP] = a (2E)-enoyl-[ACP] + H2O. The catalysed reaction is (3R)-hydroxydecanoyl-[ACP] = (2E)-decenoyl-[ACP] + H2O. The enzyme catalyses (2E)-decenoyl-[ACP] = (3Z)-decenoyl-[ACP]. It functions in the pathway lipid metabolism; fatty acid biosynthesis. Necessary for the introduction of cis unsaturation into fatty acids. Catalyzes the dehydration of (3R)-3-hydroxydecanoyl-ACP to E-(2)-decenoyl-ACP and then its isomerization to Z-(3)-decenoyl-ACP. Can catalyze the dehydratase reaction for beta-hydroxyacyl-ACPs with saturated chain lengths up to 16:0, being most active on intermediate chain length. This is 3-hydroxydecanoyl-[acyl-carrier-protein] dehydratase from Pectobacterium carotovorum subsp. carotovorum (strain PC1).